The primary structure comprises 336 residues: UDP-N-acetylglucosamine--N-acetylmuramyl-(pentapeptide) pyrophosphoryl-undecaprenol N-acetylglucosamine transferase (336 aa).

UDP-N-acetyl-alpha-D-glucosamine-binding positions include 10 to 12 (TGG), N124, R157, S179, and Q277.

Belongs to the glycosyltransferase 28 family. MurG subfamily.

Its subcellular location is the cell inner membrane. The enzyme catalyses di-trans,octa-cis-undecaprenyl diphospho-N-acetyl-alpha-D-muramoyl-L-alanyl-D-glutamyl-meso-2,6-diaminopimeloyl-D-alanyl-D-alanine + UDP-N-acetyl-alpha-D-glucosamine = di-trans,octa-cis-undecaprenyl diphospho-[N-acetyl-alpha-D-glucosaminyl-(1-&gt;4)]-N-acetyl-alpha-D-muramoyl-L-alanyl-D-glutamyl-meso-2,6-diaminopimeloyl-D-alanyl-D-alanine + UDP + H(+). It functions in the pathway cell wall biogenesis; peptidoglycan biosynthesis. Cell wall formation. Catalyzes the transfer of a GlcNAc subunit on undecaprenyl-pyrophosphoryl-MurNAc-pentapeptide (lipid intermediate I) to form undecaprenyl-pyrophosphoryl-MurNAc-(pentapeptide)GlcNAc (lipid intermediate II). The sequence is that of UDP-N-acetylglucosamine--N-acetylmuramyl-(pentapeptide) pyrophosphoryl-undecaprenol N-acetylglucosamine transferase from Wolinella succinogenes (strain ATCC 29543 / DSM 1740 / CCUG 13145 / JCM 31913 / LMG 7466 / NCTC 11488 / FDC 602W) (Vibrio succinogenes).